We begin with the raw amino-acid sequence, 122 residues long: Large ribosomal subunit protein uL14 (122 aa).

Belongs to the universal ribosomal protein uL14 family. Part of the 50S ribosomal subunit. Forms a cluster with proteins L3 and L19. In the 70S ribosome, L14 and L19 interact and together make contacts with the 16S rRNA in bridges B5 and B8.

In terms of biological role, binds to 23S rRNA. Forms part of two intersubunit bridges in the 70S ribosome. This is Large ribosomal subunit protein uL14 from Mycobacteroides abscessus (strain ATCC 19977 / DSM 44196 / CCUG 20993 / CIP 104536 / JCM 13569 / NCTC 13031 / TMC 1543 / L948) (Mycobacterium abscessus).